We begin with the raw amino-acid sequence, 109 residues long: MAKNSNPSAFDRDFGYLMPFLDRVAAAASDLEDASARAELTRLMVEEKARWQRIQELLGGAGGRGAAAPTPAREAPAEAPRLARGSADELHEAAPFATGLTVGSLRGSR.

Residue E47 participates in Fe cation binding. The segment at 61 to 94 is disordered; sequence AGGRGAAAPTPAREAPAEAPRLARGSADELHEAA. The segment covering 66-85 has biased composition (low complexity); that stretch reads AAAPTPAREAPAEAPRLARG. The probable targeting peptide stretch occupies residues 100-106; the sequence is LTVGSLR.

The protein resides in the encapsulin nanocompartment. Cargo protein of a type 1 encapsulin nanocompartment. May help nucleate Fe atoms in the interior of the encapsulin nanocompartment. Present in about 47 copies/encapsulin nanocompartment. This is Encapsulin nanocompartment cargo protein EncD from Myxococcus xanthus (strain DK1622).